The sequence spans 365 residues: Myocyte-specific enhancer factor 2B (365 aa).

One can recognise an MADS-box domain in the interval 3–57 (RKKIQISRILDQRNRQVTFTKRKFGLMKKAYELSVLCDCEIALIIFNSANRLFQY). The mef2-type DNA-binding region spans 58-86 (ASTDMDRVLLKYTEYSEPHESRTNTDILE). Disordered regions lie at residues 94–124 (GLDG…GDPA), 142–309 (VVYG…SPGP), and 321–365 (AGCP…KTQQ). Over residues 98–108 (PELEPDEGPEE) the composition is skewed to acidic residues. Polar residues predominate over residues 223–240 (NTSRSLYSGLQNPCSTAT). Composition is skewed to low complexity over residues 277 to 289 (PQSA…SLRP) and 326 to 346 (PTAG…SPGT). Residues 354–365 (TSLQASSEKTQQ) are compositionally biased toward polar residues.

Belongs to the MEF2 family. Interacts with HDAC7. Heterodimer. Interacts with HDAC9. Expressed in skeletal and cardiac muscle and brain.

It is found in the nucleus. Functionally, transcriptional activator which binds specifically to the MEF2 element, 5'-YTA[AT](4)TAR-3', found in numerous muscle-specific genes. Activates transcription via this element. May be involved in muscle-specific and/or growth factor-related transcription. The sequence is that of Myocyte-specific enhancer factor 2B (MEF2B) from Homo sapiens (Human).